An 894-amino-acid polypeptide reads, in one-letter code: Interleukin enhancer-binding factor 3 (894 aa).

The 374-residue stretch at 5 to 378 (RIFVNDDRHV…PMKRPMEEDG (374 aa)) folds into the DZF domain. The disordered stretch occupies residues 50–86 (DEQEKGSSEQAESDNMDVPPEDDSKEGAGEQKTEHMT). Over residues 60–73 (AESDNMDVPPEDDS) the composition is skewed to acidic residues. Ser-62 bears the Phosphoserine mark. Over residues 74–86 (KEGAGEQKTEHMT) the composition is skewed to basic and acidic residues. An N6-acetyllysine modification is found at Lys-100. Thr-188 carries the phosphothreonine; by PKR modification. Position 190 is a phosphoserine (Ser-190). Lys-297 participates in a covalent cross-link: Glycyl lysine isopeptide (Lys-Gly) (interchain with G-Cter in ubiquitin). Residue Thr-315 is modified to Phosphothreonine; by PKR. A Glycyl lysine isopeptide (Lys-Gly) (interchain with G-Cter in SUMO1) cross-link involves residue Lys-348. The segment at 363 to 401 (TTYAITPMKRPMEEDGEEKSPSKKKKKIQKKEEKAEPPQ) is disordered. Positions 371–389 (KRPMEEDGEEKSPSKKKKK) match the Bipartite nuclear localization signal motif. Positions 372 to 383 (RPMEEDGEEKSP) are enriched in basic and acidic residues. Phosphoserine is present on residues Ser-382 and Ser-384. A Glycyl lysine isopeptide (Lys-Gly) (interchain with G-Cter in SUMO2) cross-link involves residue Lys-396. Residues 398–467 (EPPQAMNALM…AVKVLQDMGL (70 aa)) form the DRBM 1 domain. Lys-460 bears the N6-acetyllysine mark. The segment at 466-524 (GLPTGAEGRDSSKGEDSAEETEAKPAVVAPAPVVEAVSTPSAAFPSDATAEQGPILTKH) is disordered. A compositionally biased stretch (basic and acidic residues) spans 472–481 (EGRDSSKGED). Phosphoserine is present on residues Ser-476, Ser-477, and Ser-482. Lys-489 is covalently cross-linked (Glycyl lysine isopeptide (Lys-Gly) (interchain with G-Cter in SUMO2)). The segment covering 489–508 (KPAVVAPAPVVEAVSTPSAA) has biased composition (low complexity). One can recognise a DRBM 2 domain in the interval 524 to 590 (HGKNPVMELN…ALAALEKLFP (67 aa)). A Phosphothreonine modification is found at Thr-592. The tract at residues 609–894 (RGGPKFAAKP…ADHSMNYQYR (286 aa)) is interaction with PRMT1. Disordered stretches follow at residues 625-660 (MGGP…FGGA) and 718-894 (QGDN…YQYR). The span at 644–660 (RGGSIRGRGRGRGFGGA) shows a compositional bias: gly residues. Composition is skewed to low complexity over residues 743–770 (PSYG…YGPP) and 777–792 (YNHG…SYNS). Ser-792, Ser-810, Ser-812, and Ser-816 each carry phosphoserine. Composition is skewed to gly residues over residues 811–825 (GSGG…GSGG) and 832–851 (SHGG…GKQG). The span at 857 to 866 (NYNSPGSGQN) shows a compositional bias: polar residues. Residues 867–878 (YSGPPSSYQSSQ) are compositionally biased toward low complexity.

As to quaternary structure, identified in a IGF2BP1-dependent mRNP granule complex containing untranslated mRNAs. Interacts with FUS and SMN. Interacts (via C-terminus) with PRMT1. Forms a complex with ILF2. Can also bind to PRKDC/XRCC7: this may stabilize the interaction of PRKDC/XRCC7 and the heterodimeric complex of XRCC6/KU70 and XRCC5/KU80. Forms a heteromeric complex with ZNF346 and ILF3. Found in a nuclear export complex with XPO5, ILF3, Ran and double-stranded RNA or double-stranded minihelix VA1 RNA. Found in a nuclear export complex with XPO5, RAN, ILF3, ZNF346 and double-stranded RNA. Interacts with XPO5 and ZNF346. Forms a complex with ILF2, YLPM1, KHDRBS1, RBMX, NCOA5 and PPP1CA. Interacts with AGO1 and AGO2. Interacts with DHX36; this interaction occurs in a RNA-dependent manner. Interacts with ELAVL1; this interaction occurs in a RNA-dependent manner. Interacts with HAVCR2; this interaction promotes ILF3 ubiquitination and subsequent degradation. In terms of processing, phosphorylated at Thr-188 and Thr-315 by PKR in response to certain RNA viruses. This phosphorylation results in the dissociation of ILF2 from the ILF2-ILF3 complex resulting in a cytoplasmic sequestration of ILF3 where it can bind to viral RNAs and impede viral replication. Post-translationally, methylated by protein arginine N-methyltransferase 1. Ubiquitinated at Lys-297 in a TRIM47-dependent manner; this 'Lys-48'-linked ubiquitination promotes ILF3 degradation. In terms of tissue distribution, ubiquitous.

The protein resides in the nucleus. The protein localises to the nucleolus. It is found in the cytoplasm. RNA-binding protein that plays an essential role in the biogenesis of circular RNAs (circRNAs) which are produced by back-splicing circularization of pre-mRNAs. Within the nucleus, promotes circRNAs processing by stabilizing the regulatory elements residing in the flanking introns of the circularized exons. Plays thereby a role in the back-splicing of a subset of circRNAs. As a consequence, participates in a wide range of transcriptional and post-transcriptional processes. Binds to poly-U elements and AU-rich elements (AREs) in the 3'-UTR of target mRNAs. Upon viral infection, ILF3 accumulates in the cytoplasm and participates in the innate antiviral response. Mechanistically, ILF3 becomes phosphorylated and activated by the double-stranded RNA-activated protein kinase/PKR which releases ILF3 from cellular mature circRNAs. In turn, unbound ILF3 molecules are able to interact with and thus inhibit viral mRNAs. Its function is as follows. (Microbial infection) Plays a positive role in HIV-1 virus production by binding to and thereby stabilizing HIV-1 RNA, together with ILF3. The polypeptide is Interleukin enhancer-binding factor 3 (ILF3) (Homo sapiens (Human)).